We begin with the raw amino-acid sequence, 195 residues long: 3-isopropylmalate dehydratase small subunit (195 aa).

The protein belongs to the LeuD family. LeuD type 1 subfamily. Heterodimer of LeuC and LeuD.

The enzyme catalyses (2R,3S)-3-isopropylmalate = (2S)-2-isopropylmalate. The protein operates within amino-acid biosynthesis; L-leucine biosynthesis; L-leucine from 3-methyl-2-oxobutanoate: step 2/4. Functionally, catalyzes the isomerization between 2-isopropylmalate and 3-isopropylmalate, via the formation of 2-isopropylmaleate. The protein is 3-isopropylmalate dehydratase small subunit of Salinispora tropica (strain ATCC BAA-916 / DSM 44818 / JCM 13857 / NBRC 105044 / CNB-440).